The following is a 138-amino-acid chain: HHSKHHATYVKGANDALEKLEEARAKDDQSTVLLNEKNLAFNLAGHVNHTIWWKNLSPNGGDKPTGELAAAIDDAFGSFDKFRAQFHAAATTVQGSGWAALGWDNLGEKLLIFQVYDHQSNFPLGVVPLLLLDMWEHA.

Residues His1, His49, Asp133, and His137 each coordinate Mn(2+).

It belongs to the iron/manganese superoxide dismutase family. Mn(2+) is required as a cofactor.

The enzyme catalyses 2 superoxide + 2 H(+) = H2O2 + O2. Functionally, destroys superoxide anion radicals which are normally produced within the cells and which are toxic to biological systems. This is Superoxide dismutase [Mn] (sodA) from Mycobacterium celatum.